A 164-amino-acid polypeptide reads, in one-letter code: UPF0114 protein Spro_2386 (164 aa).

A run of 3 helical transmembrane segments spans residues 15-35 (LLAPVYFGLSLALLALSIKFF), 53-73 (LVLTLLSLIDMALVGGLLVMV), and 136-156 (LMWYVIIHLTFVLSAFVMGYL).

The protein belongs to the UPF0114 family.

Its subcellular location is the cell membrane. The polypeptide is UPF0114 protein Spro_2386 (Serratia proteamaculans (strain 568)).